Consider the following 1097-residue polypeptide: MCPSEMGTLWYLWSPVLISLAALFSKVTEGRGILESIQRFSLLPTYLPVTYHINNADVSFFLKEANQDIMRNSSLQSRVESFLIYKSRRLPVLNASYGPFSLEQVVPQDLMLPSNPFGFTNTFSLNWRLKAYILQEKVYLSHPKVQVLFHIVGRDWDDHRDENLPCLRVFAFRETQEVRGSCRLGGALGLCVAQLEMLPGWFSPPSVVSGRRRPTEQPEGSPVELYYAVQPGDERGDCAKEDSRKSGGAPAGHNDVDESSPPLHRIGSVFLRETPSSPPLRELRLDSNVAVHYIPKTVRQGDVLTFPISVSRNCTEDRFTLRAKVKKGVSIVGVRASTSSLWDVKQSTEYTGKYAPAVIICQKKSAGSGKSVDDASYEVMKIDIEVEAPSDPPTTQLVTWQVEYPGEITSDLGVSKIYVSQKDLIGVIPLAMEAEILNTAILTGKTVAVPVKVISVEEDGTVQGLSDSVECRSSDEDVVKVSDRCDYVFVNGKEMKGKVNVVVTVTYQHLSSPLEMTVWVPRLPLQIEVSDMELNQIKGWRVPVVSNKRPARDSEEEDDDEKRGRGCTLQYQHAMVRVLTQFVAEAPDPGGHLAHLLGSDWQVDITELITDFMQVEEPRIAKLQGGQILTGQELGMTTIQILSPLSDAILAEKTITVLDEKVTITDLGVQLVTGLSLSLQLSPGSNRAIFATAVAQELLQRPKQEAAISCWVQFSDGSVTPLDIYDEKDFSLMATSLDEKVVSILQDPKFKWPIIAAENEGQGALVKVEMLISESCQKSKRKSVLAVGTASIKVKFGQNDANPNGSESGHLGAGLHVENINDRRSKKPFQEWGSPEGPYYSSSSMGLMEGWGSTTKRPTFPKKEGQENLLDDIILSQTMATDLTSFPDQVDLPGSNVGTEEHDPDQAAKGLSDLEIGMYALLGVFCLAILVFLINCVTFALKYRHKQVPFEEQEGLSHSHDWVGLSNRTELLGNHMNFASSQEEQITAIDRGLDFEESKLLLSSNSQNSINGQLFRSTGAMLTDDKEQKSEPPTSPTSKRKRVTFSTFSAISSDDGCPSGNTMVLSNEDDIKWVCQALDPGECPEPHSCMERLHEHV.

The first 30 residues, 1-30 (MCPSEMGTLWYLWSPVLISLAALFSKVTEG), serve as a signal peptide directing secretion. At 31–913 (RGILESIQRF…PDQAAKGLSD (883 aa)) the chain is on the extracellular side. The span at 233-245 (DERGDCAKEDSRK) shows a compositional bias: basic and acidic residues. Disordered stretches follow at residues 233 to 263 (DERGDCAKEDSRKSGGAPAGHNDVDESSPPL) and 885 to 906 (SFPDQVDLPGSNVGTEEHDPDQ). The chain crosses the membrane as a helical span at residues 914-934 (LEIGMYALLGVFCLAILVFLI). The Cytoplasmic portion of the chain corresponds to 935–1097 (NCVTFALKYR…SCMERLHEHV (163 aa)). A disordered region spans residues 1021–1042 (MLTDDKEQKSEPPTSPTSKRKR).

It belongs to the TMEM132 family. Expressed in mature oligodendrocytes in the brain.

Its subcellular location is the membrane. Its function is as follows. Regulates neuronal morphology via inhibition of the WAVE regulatory complex (WCR), a complex that controls F-actin cytoskeletal dynamics. This chain is Transmembrane protein 132D (Tmem132d), found in Rattus norvegicus (Rat).